We begin with the raw amino-acid sequence, 390 residues long: Ribosomal RNA small subunit methyltransferase H (390 aa).

S-adenosyl-L-methionine is bound by residues 47-49, aspartate 66, phenylalanine 93, aspartate 122, and glutamine 129; that span reads GGH. Residues 282-390 form a disordered region; it reads SKTPPGLPID…SHREDVEGEQ (109 aa). Over residues 305 to 316 the composition is skewed to basic and acidic residues; it reads GSEKADEQENNK. Positions 348–358 are enriched in polar residues; it reads SGSSTTYSARS. 2 stretches are compositionally biased toward basic and acidic residues: residues 360–372 and 381–390; these read SRHEAHREGREHL and SHREDVEGEQ.

The protein belongs to the methyltransferase superfamily. RsmH family.

The protein localises to the cytoplasm. The catalysed reaction is cytidine(1402) in 16S rRNA + S-adenosyl-L-methionine = N(4)-methylcytidine(1402) in 16S rRNA + S-adenosyl-L-homocysteine + H(+). Functionally, specifically methylates the N4 position of cytidine in position 1402 (C1402) of 16S rRNA. The protein is Ribosomal RNA small subunit methyltransferase H of Corynebacterium kroppenstedtii (strain DSM 44385 / JCM 11950 / CIP 105744 / CCUG 35717).